Here is a 143-residue protein sequence, read N- to C-terminus: Cytochrome c-type biogenesis protein CcmE (143 aa).

The Cytoplasmic portion of the chain corresponds to 1–8 (MNPVRRRK). Residues 9–29 (LFILLFALTILSAAAALVLYA) traverse the membrane as a helical; Signal-anchor for type II membrane protein segment. Over 30-143 (LRQNISLFYT…KSALADKVKQ (114 aa)) the chain is Periplasmic. 2 residues coordinate heme: H124 and Y128.

Belongs to the CcmE/CycJ family.

The protein localises to the cell inner membrane. Its function is as follows. Heme chaperone required for the biogenesis of c-type cytochromes. Transiently binds heme delivered by CcmC and transfers the heme to apo-cytochromes in a process facilitated by CcmF and CcmH. This is Cytochrome c-type biogenesis protein CcmE from Legionella pneumophila (strain Corby).